The chain runs to 145 residues: Histone H2B.1, sperm (145 aa).

Residues 1–52 (MPSQKSPTKRSPTKRSPTKRSPQKGGKGGKGAKRGGKAGKRRRGVQVKRRRR) are disordered. 4 consecutive short sequence motifs (SPKK motif) follow at residues 6 to 9 (SPTK), 11 to 14 (SPTK), 16 to 19 (SPTK), and 21 to 24 (SPQK). 2 stretches are compositionally biased toward basic residues: residues 7–22 (PTKR…KRSP) and 30–52 (KGAK…RRRR). Phosphoserine occurs at positions 16 and 21. An O-linked (GlcNAc) serine glycan is attached at Ser-132. Residue Lys-140 forms a Glycyl lysine isopeptide (Lys-Gly) (interchain with G-Cter in ubiquitin) linkage.

This sequence belongs to the histone H2B family. The nucleosome is a histone octamer containing two molecules each of H2A, H2B, H3 and H4 assembled in one H3-H4 heterotetramer and two H2A-H2B heterodimers. The octamer wraps approximately 147 bp of DNA. Post-translationally, monoubiquitination of Lys-140 gives a specific tag for epigenetic transcriptional activation and is also prerequisite for histone H3 'Lys-4' and 'Lys-79' methylation. In terms of processing, phosphorylated on SPKK motifs 3 and 4; which may regulate DNA binding. Dephosphorylated during maturation of spermatids to mature sperm and rephosphorylated at fertilization. GlcNAcylation at Ser-132 promotes monoubiquitination of Lys-140. It fluctuates in response to extracellular glucose, and associates with transcribed genes.

The protein resides in the nucleus. The protein localises to the chromosome. Its function is as follows. Core component of nucleosome. Nucleosomes wrap and compact DNA into chromatin, limiting DNA accessibility to the cellular machineries which require DNA as a template. Histones thereby play a central role in transcription regulation, DNA repair, DNA replication and chromosomal stability. DNA accessibility is regulated via a complex set of post-translational modifications of histones, also called histone code, and nucleosome remodeling. The sequence is that of Histone H2B.1, sperm from Parechinus angulosus (Angulate sea urchin).